Consider the following 426-residue polypeptide: Serine--tRNA ligase (426 aa).

Position 230 to 232 (230 to 232 (TSE)) interacts with L-serine. 261-263 (RKE) contributes to the ATP binding site. Position 284 (Glu-284) interacts with L-serine. 348 to 351 (EISS) lines the ATP pocket. Ser-385 lines the L-serine pocket.

The protein belongs to the class-II aminoacyl-tRNA synthetase family. Type-1 seryl-tRNA synthetase subfamily. In terms of assembly, homodimer. The tRNA molecule binds across the dimer.

Its subcellular location is the cytoplasm. It carries out the reaction tRNA(Ser) + L-serine + ATP = L-seryl-tRNA(Ser) + AMP + diphosphate + H(+). The catalysed reaction is tRNA(Sec) + L-serine + ATP = L-seryl-tRNA(Sec) + AMP + diphosphate + H(+). It functions in the pathway aminoacyl-tRNA biosynthesis; selenocysteinyl-tRNA(Sec) biosynthesis; L-seryl-tRNA(Sec) from L-serine and tRNA(Sec): step 1/1. Catalyzes the attachment of serine to tRNA(Ser). Is also able to aminoacylate tRNA(Sec) with serine, to form the misacylated tRNA L-seryl-tRNA(Sec), which will be further converted into selenocysteinyl-tRNA(Sec). The polypeptide is Serine--tRNA ligase (Wolbachia pipientis subsp. Culex pipiens (strain wPip)).